Reading from the N-terminus, the 59-residue chain is uncharacterized protein (59 aa).

A signal peptide spans 1–21 (MYLFYVLLSSLFLSALIYVIG). The Extracellular segment spans residues 22–24 (KSH). A helical transmembrane segment spans residues 25-45 (PNLFMFISLFVNVVTILYLVF). The Cytoplasmic segment spans residues 46–59 (KDYGQYIIAKPINT).

It is found in the host membrane. This is an uncharacterized protein from Acidianus convivator (ABV).